The sequence spans 395 residues: S-adenosylmethionine synthase 5 (395 aa).

E10 serves as a coordination point for Mg(2+). H16 provides a ligand contact to ATP. E44 is a binding site for K(+). Residues E57 and Q100 each coordinate L-methionine. ATP is bound by residues D168–K170, S236–F239, D247, R253–K254, A270, K274, and K278. D247 lines the L-methionine pocket. Position 278 (K278) interacts with L-methionine.

It belongs to the AdoMet synthase family. In terms of assembly, homotetramer. Requires Mn(2+) as cofactor. It depends on Mg(2+) as a cofactor. Co(2+) serves as cofactor. The cofactor is K(+).

Its subcellular location is the cytoplasm. It carries out the reaction L-methionine + ATP + H2O = S-adenosyl-L-methionine + phosphate + diphosphate. Its pathway is amino-acid biosynthesis; S-adenosyl-L-methionine biosynthesis; S-adenosyl-L-methionine from L-methionine: step 1/1. Its function is as follows. Catalyzes the formation of S-adenosylmethionine from methionine and ATP. The reaction comprises two steps that are both catalyzed by the same enzyme: formation of S-adenosylmethionine (AdoMet) and triphosphate, and subsequent hydrolysis of the triphosphate. In Populus trichocarpa (Western balsam poplar), this protein is S-adenosylmethionine synthase 5 (METK5).